The following is a 569-amino-acid chain: Paxillin-B (569 aa).

The LD motif 1 signature appears at 10–18 (DLDLLLADL). Residues 62–78 (QPQTVQTISTPAPKNHN) are compositionally biased toward polar residues. The segment at 62–103 (QPQTVQTISTPAPKNHNTTTTTASFSVSSQPAPQPPQQSQQI) is disordered. Residues 79 to 102 (TTTTTASFSVSSQPAPQPPQQSQQ) show a composition bias toward low complexity. Residues 106 to 112 (LDDLDEL) carry the LD motif 2 motif. The disordered stretch occupies residues 129–311 (TTPEEHITHA…SPKVVHGDDL (183 aa)). The segment covering 150–161 (NTSSTNSASSLS) has biased composition (low complexity). Polar residues-rich tracts occupy residues 162–188 (RPNNNPSVVSTPQPGKVTSTATITTKK) and 196–206 (TLETTSGNNVY). Low complexity predominate over residues 207–217 (SSQPSQSQPQP). Residues 232–239 (LDELLKGL) carry the LD motif 3 motif. The span at 258–272 (HQHHHQHQHHHHHNP) shows a compositional bias: basic residues. The span at 273–301 (NHNQTQTVTTQINIGRTNTPNNNNNNNTN) shows a compositional bias: low complexity. The short motif at 311-318 (LDNLLNNL) is the LD motif 4 element. 4 LIM zinc-binding domains span residues 334-391 (GTCG…QELF), 393-452 (ARCA…TFAV), 453-510 (RCGG…QQAG), and 511-569 (SVCS…KLFA).

The protein belongs to the paxillin family. In terms of tissue distribution, expressed in the upper and lower cup of the fruiting body.

It localises to the cytoplasm. Its subcellular location is the cell cortex. It is found in the cell projection. The protein resides in the filopodium. The protein localises to the cell junction. It localises to the focal adhesion. Its subcellular location is the cytoskeleton. Functionally, required for cell-substrate adhesion, cell sorting, slug migration, and cell differentiation. May function upstream of limB. In Dictyostelium discoideum (Social amoeba), this protein is Paxillin-B (paxB).